The primary structure comprises 101 residues: MDKSKRPFLKSKRSFRRRLPPIQSGDRIDYRNMSLISRFISEQGKILSRRVNRLTLKQQRLITIAIKQARILSLLPFLNNDKQFERTESTARTAGLRARKK.

It belongs to the bacterial ribosomal protein bS18 family. As to quaternary structure, part of the 30S ribosomal subunit.

The protein resides in the plastid. The protein localises to the chloroplast. This Panax ginseng (Korean ginseng) protein is Small ribosomal subunit protein bS18c.